A 432-amino-acid polypeptide reads, in one-letter code: Adenylosuccinate synthetase 1 (432 aa).

Residues 12 to 18 (GDEGKGR) and 40 to 42 (GHT) each bind GTP. Asp-13 functions as the Proton acceptor in the catalytic mechanism. The Mg(2+) site is built by Asp-13 and Gly-40. IMP is bound by residues 13–16 (DEGK), 38–41 (NAGH), Thr-128, Arg-142, Gln-222, Thr-237, and Arg-301. The active-site Proton donor is His-41. Residue 297–303 (TNTGRPR) coordinates substrate. GTP is bound by residues Arg-303, 329–331 (KLD), and 411–413 (STG).

The protein belongs to the adenylosuccinate synthetase family. In terms of assembly, homodimer. The cofactor is Mg(2+).

Its subcellular location is the cytoplasm. It carries out the reaction IMP + L-aspartate + GTP = N(6)-(1,2-dicarboxyethyl)-AMP + GDP + phosphate + 2 H(+). Its pathway is purine metabolism; AMP biosynthesis via de novo pathway; AMP from IMP: step 1/2. Functionally, plays an important role in the de novo pathway of purine nucleotide biosynthesis. Catalyzes the first committed step in the biosynthesis of AMP from IMP. In Chromobacterium violaceum (strain ATCC 12472 / DSM 30191 / JCM 1249 / CCUG 213 / NBRC 12614 / NCIMB 9131 / NCTC 9757 / MK), this protein is Adenylosuccinate synthetase 1.